The sequence spans 182 residues: Ribosome maturation factor RimM (182 aa).

Residues 102 to 182 (EEGDYYWKDL…TIEVDWDPGF (81 aa)) enclose the PRC barrel domain.

This sequence belongs to the RimM family. In terms of assembly, binds ribosomal protein uS19.

Its subcellular location is the cytoplasm. An accessory protein needed during the final step in the assembly of 30S ribosomal subunit, possibly for assembly of the head region. Essential for efficient processing of 16S rRNA. May be needed both before and after RbfA during the maturation of 16S rRNA. It has affinity for free ribosomal 30S subunits but not for 70S ribosomes. In Klebsiella pneumoniae (strain 342), this protein is Ribosome maturation factor RimM.